The primary structure comprises 171 residues: MTNFTFDGAHSSLEFQIKHLMVSKVKGSFDQFDVAVEGDINDFSTLKATATIIPSSINTKNDARDNHLKSGDFFGTDEFDKITFETKSVTENKVVGDLTIKGITNEETFDVEFNGVSKNPMDGSQVTGIIVTGTINREKYGINFNQALETGGVMLGKDVKFEASAEFSISE.

The protein belongs to the UPF0312 family.

The sequence is that of UPF0312 protein SAB2563 from Staphylococcus aureus (strain bovine RF122 / ET3-1).